The primary structure comprises 867 residues: MIHLHSPPTAPAAFGGAGSADWRRRRRWSWSSSSRAPVAKGGHLRPCVWRRGGDDGGGEDHHADGGGGGGGGAAWRARATTAGVSSSSSTAKGLQANIIEHETPRITKWPNESRDLDDHQQNNEADEEADDELQPLVEQVRSMLSSMEDGAITASAYDTAWVALVPRLDGEGGTQFPAAVRWIVGSQLADGSWGDEALFSAYDRVINTLACVVALTRWSLHHDQCKQGLQFLNLNLWRLAEEEPDTMPIGFEIAFPSLVEAARGLGIDFPYDHPALKGIYANRELKLKRIPKDMMHIVPTSILHSLEGMPGLDWQRLLKLQCSDGSFLFSPSATAYALMQTGDKKCFAYIDRIIKKFDGGVPNVYPVDLFEHIWVVDRLERLGISRYFQREIEQNMDYVNRHWTEDGICWARNSNVKEVDDTAMAFRLLRLHGYNVSPSVFKNFEKDGEFFCFVGQSTQAVTGMYNLNRASQISFPGEDILQRARNFSYEFLREREAQGTLHDKWIISKDLPGEVQYTLDFPWYASLPRVEARTYIGQYGGNDDVWIGKTLYRMPIVNNATYLELAKQDFNRCQALHQHELQGLQKWFIENGLEAFGMTPEDVLRAYFLAAACIFEPNRASERLAWARVSVLANTISRHFYSDMSSMKRMERFMWSSLYEENGNVLGLEGYAKDGILARTLCQLIDLLSQETPPVREGQKCIHNLIRCAWIEWMMQQINMKDGRYDKGRVMHPGSCTVHNKETCLLIAQIVEICAGRIEEAASMINNTEGSWFIQLASSICDSLHAKMLLSQDTKKNETTINQIDKEIELGMQELAQYLLPRVDDRRINNKTKQTFLSIVKSCYYAANCSPHMLDQHISEVIFEQVI.

A chloroplast-targeting transit peptide spans 1–35; the sequence is MIHLHSPPTAPAAFGGAGSADWRRRRRWSWSSSSR. The tract at residues 1 to 134 is disordered; it reads MIHLHSPPTA…ADEEADDELQ (134 aa). A compositionally biased stretch (basic and acidic residues) spans 51-64; it reads RGGDDGGGEDHHAD. Over residues 74 to 89 the composition is skewed to low complexity; the sequence is AWRARATTAGVSSSSS. Over residues 99 to 121 the composition is skewed to basic and acidic residues; that stretch reads IEHETPRITKWPNESRDLDDHQQ. Over residues 124–133 the composition is skewed to acidic residues; it reads EADEEADDEL. Residue K286 participates in substrate binding. The DXDD motif signature appears at 418-421; that stretch reads EVDD. Substrate is bound at residue K504.

Belongs to the terpene synthase family. Mg(2+) serves as cofactor.

The protein localises to the plastid. The protein resides in the chloroplast. It carries out the reaction (2E,6E,10E)-geranylgeranyl diphosphate = ent-copalyl diphosphate. It participates in plant hormone biosynthesis; gibberellin biosynthesis. Functionally, catalyzes the conversion of geranylgeranyl diphosphate to the gibberellin precursor ent-copalyl diphosphate. The sequence is that of Ent-copalyl diphosphate synthase 1, chloroplastic (CPS1) from Oryza sativa subsp. japonica (Rice).